A 321-amino-acid polypeptide reads, in one-letter code: tRNA pseudouridine synthase B (321 aa).

The active-site Nucleophile is the Asp-47.

It belongs to the pseudouridine synthase TruB family. Type 1 subfamily.

It carries out the reaction uridine(55) in tRNA = pseudouridine(55) in tRNA. Its function is as follows. Responsible for synthesis of pseudouridine from uracil-55 in the psi GC loop of transfer RNAs. This is tRNA pseudouridine synthase B from Shewanella baltica (strain OS185).